Here is a 919-residue protein sequence, read N- to C-terminus: MNELLRDDIRYLGRILGEVISEQEGHHVFELVERARRTSFDIAKGRAEMDSLVEVFAGIDPEDATPVARAFTHFALLANLAEDLHDAAQREQALNSGEPAPDSTLEATWVKLDDAGVGSGEVAAVIRNALVAPVLTAHPTETRRRTVFDAQKHITALMEERHLLLALPTHARTQSKLDDIERNIRRRITILWQTALIRVARPRIEDEVEVGLRYYKLSLLAEIPRINHDVTVELARRFGGDIPTTAMVRPGSWIGGDHDGNPFVTAETVTYATHRAAETVLKYYVKQLHALEHELSLSDRMNVISDELRVLADAGQNDMPSRVDEPYRRAIHGMRGRMLATTAALIGEEAVEGTWFKTFTPYTDTHEFKRDLDIVDGSLRMSRDDIIADDRLAMLRSALDSFGFNLYSLDLRQNSDGFEDVLTELFATAQTEKNYRGLTEAEKLDLLIRELSTPRPLIPHGDPDYSEATNRELGIFSKAAEAVRKFGPLMVPHCIISMASSVTDILEPMVLLKEFGLIRANGKNPTGSVDVIPLFETIDDLQRGAGILEELWDIDLYRNYLEQRDNVQEVMLGYSDSNKDGGYFAANWALYDAELRLVELCRGRNVKLRLFHGRGGTVGRGGGPSYDAILAQPKGAVRGAVRVTEQGEIISAKYGNPDTARRNLEALVSATLEASLLDDVELPNRERAHQIMGEISELSFRRYSSLVHEDPGFIQYFTQSTPLQEIGSLNIGSRPSSRKQTNTVEDLRAIPWVLSWSQSRVMLPGWFGVGTALREWIGEGEGAAERIAELQELNRCWPFFTSVLDNMAQVMSKAELRLARLYADLIPDREVADRIYETIFGEYFLTKEMFCTITGSQDLLDDNPALARSVRSRFPYLLPLNVIQVEMMRRYRSGDEGTAVPRNIRLTMNGLSTALRNSG.

Active-site residues include His138 and Lys579.

It belongs to the PEPCase type 1 family. Mg(2+) serves as cofactor.

It carries out the reaction oxaloacetate + phosphate = phosphoenolpyruvate + hydrogencarbonate. Its function is as follows. Forms oxaloacetate, a four-carbon dicarboxylic acid source for the tricarboxylic acid cycle. The sequence is that of Phosphoenolpyruvate carboxylase (ppc) from Corynebacterium efficiens (strain DSM 44549 / YS-314 / AJ 12310 / JCM 11189 / NBRC 100395).